The chain runs to 307 residues: Oxygen-dependent coproporphyrinogen-III oxidase (307 aa).

Substrate is bound at residue S97. Residues H101 and H111 each contribute to the a divalent metal cation site. The active-site Proton donor is the H111. 113-115 (NVR) is a substrate binding site. A divalent metal cation is bound by residues H152 and H182. Positions 247–282 (YVEFNLVWDRGTHFGLQSGGRTESILMSMPPLASWS) are important for dimerization. Substrate is bound at residue 265-267 (GGR).

This sequence belongs to the aerobic coproporphyrinogen-III oxidase family. In terms of assembly, homodimer. It depends on a divalent metal cation as a cofactor.

It localises to the cytoplasm. The enzyme catalyses coproporphyrinogen III + O2 + 2 H(+) = protoporphyrinogen IX + 2 CO2 + 2 H2O. The protein operates within porphyrin-containing compound metabolism; protoporphyrin-IX biosynthesis; protoporphyrinogen-IX from coproporphyrinogen-III (O2 route): step 1/1. Involved in the heme biosynthesis. Catalyzes the aerobic oxidative decarboxylation of propionate groups of rings A and B of coproporphyrinogen-III to yield the vinyl groups in protoporphyrinogen-IX. This Polaromonas naphthalenivorans (strain CJ2) protein is Oxygen-dependent coproporphyrinogen-III oxidase.